A 124-amino-acid chain; its full sequence is Cytochrome c oxidase subunit 4 isoform 1, mitochondrial (124 aa).

An N6-acetyllysine; alternate modification is found at lysine 4. Lysine 4 bears the N6-succinyllysine; alternate mark. A phosphoserine mark is found at serine 31 and serine 33. Lysine 35 carries the N6-acetyllysine; alternate modification. Lysine 35 is modified (N6-succinyllysine; alternate). Residue lysine 42 is modified to N6-acetyllysine.

The protein belongs to the cytochrome c oxidase IV family. In terms of assembly, component of the cytochrome c oxidase (complex IV, CIV), a multisubunit enzyme composed of 14 subunits. The complex is composed of a catalytic core of 3 subunits MT-CO1, MT-CO2 and MT-CO3, encoded in the mitochondrial DNA, and 11 supernumerary subunits COX4I, COX5A, COX5B, COX6A, COX6B, COX6C, COX7A, COX7B, COX7C, COX8 and NDUFA4, which are encoded in the nuclear genome. The complex exists as a monomer or a dimer and forms supercomplexes (SCs) in the inner mitochondrial membrane with NADH-ubiquinone oxidoreductase (complex I, CI) and ubiquinol-cytochrome c oxidoreductase (cytochrome b-c1 complex, complex III, CIII), resulting in different assemblies (supercomplex SCI(1)III(2)IV(1) and megacomplex MCI(2)III(2)IV(2)). Interacts with PHB2; the interaction decreases in absence of SPHK2. Interacts with AFG1L. Interacts with ABCB7; this interaction allows the regulation of cellular iron homeostasis and cellular reactive oxygen species (ROS) levels in cardiomyocytes. Interacts with FLVCR2; this interaction occurs in the absence of heme and is disrupted upon heme binding. Interacts with IRGC.

The protein localises to the mitochondrion inner membrane. It functions in the pathway energy metabolism; oxidative phosphorylation. Component of the cytochrome c oxidase, the last enzyme in the mitochondrial electron transport chain which drives oxidative phosphorylation. The respiratory chain contains 3 multisubunit complexes succinate dehydrogenase (complex II, CII), ubiquinol-cytochrome c oxidoreductase (cytochrome b-c1 complex, complex III, CIII) and cytochrome c oxidase (complex IV, CIV), that cooperate to transfer electrons derived from NADH and succinate to molecular oxygen, creating an electrochemical gradient over the inner membrane that drives transmembrane transport and the ATP synthase. Cytochrome c oxidase is the component of the respiratory chain that catalyzes the reduction of oxygen to water. Electrons originating from reduced cytochrome c in the intermembrane space (IMS) are transferred via the dinuclear copper A center (CU(A)) of subunit 2 and heme A of subunit 1 to the active site in subunit 1, a binuclear center (BNC) formed by heme A3 and copper B (CU(B)). The BNC reduces molecular oxygen to 2 water molecules using 4 electrons from cytochrome c in the IMS and 4 protons from the mitochondrial matrix. The polypeptide is Cytochrome c oxidase subunit 4 isoform 1, mitochondrial (COX4I1) (Saimiri sciureus (Common squirrel monkey)).